We begin with the raw amino-acid sequence, 220 residues long: 7-cyano-7-deazaguanine synthase (220 aa).

10–20 (FSGGQDSTTCL) contacts ATP. Zn(2+)-binding residues include C186, C195, C198, and C201.

It belongs to the QueC family. As to quaternary structure, homodimer. It depends on Zn(2+) as a cofactor.

It carries out the reaction 7-carboxy-7-deazaguanine + NH4(+) + ATP = 7-cyano-7-deazaguanine + ADP + phosphate + H2O + H(+). It participates in purine metabolism; 7-cyano-7-deazaguanine biosynthesis. In terms of biological role, catalyzes the ATP-dependent conversion of 7-carboxy-7-deazaguanine (CDG) to 7-cyano-7-deazaguanine (preQ(0)). The chain is 7-cyano-7-deazaguanine synthase from Bacillus cereus (strain B4264).